Consider the following 23-residue polypeptide: Phallacidin proprotein (23 aa).

Residue proline 1 is a propeptide. Positions 2 to 8 (AWLVDCP) form a cross-link, cyclopeptide (Ala-Pro). Positions 3-7 (WLVDC) form a cross-link, 2'-cysteinyl-6'-hydroxytryptophan sulfoxide (Trp-Cys). Residues 9 to 23 (CVGDDVNRLLARGEK) constitute a propeptide that is removed on maturation.

Belongs to the MSDIN fungal toxin family. In terms of processing, processed by the macrocyclase-peptidase enzyme POPB to yield a toxic cyclic heptapeptide. POPB first removes 10 residues from the N-terminus. Conformational trapping of the remaining peptide forces the enzyme to release this intermediate rather than proceed to macrocyclization. The enzyme rebinds the remaining peptide in a different conformation and catalyzes macrocyclization of the N-terminal 7 residues.

Its function is as follows. Major toxin that belongs to the bicyclic heptapeptides called phallotoxins. Although structurally related to amatoxins, phallotoxins have a different mode of action, which is the stabilization of F-actin. Phallotoxins are poisonous when administered parenterally, but not orally because of poor absorption. The protein is Phallacidin proprotein of Amanita fuliginea (East Asian brown death cap).